We begin with the raw amino-acid sequence, 306 residues long: Acetyl-coenzyme A carboxylase carboxyl transferase subunit beta (306 aa).

A CoA carboxyltransferase N-terminal domain is found at 25–294 (VWTKCDSCGQ…PSPDAPREAV (270 aa)). The Zn(2+) site is built by Cys-29, Cys-32, Cys-48, and Cys-51. The C4-type zinc-finger motif lies at 29 to 51 (CDSCGQVLYRAELERNLEVCPKC). The disordered stretch occupies residues 286–306 (SPDAPREAVVVPPVPDQDHEA).

It belongs to the AccD/PCCB family. In terms of assembly, acetyl-CoA carboxylase is a heterohexamer composed of biotin carboxyl carrier protein (AccB), biotin carboxylase (AccC) and two subunits each of ACCase subunit alpha (AccA) and ACCase subunit beta (AccD). The cofactor is Zn(2+).

It localises to the cytoplasm. The catalysed reaction is N(6)-carboxybiotinyl-L-lysyl-[protein] + acetyl-CoA = N(6)-biotinyl-L-lysyl-[protein] + malonyl-CoA. The protein operates within lipid metabolism; malonyl-CoA biosynthesis; malonyl-CoA from acetyl-CoA: step 1/1. Its function is as follows. Component of the acetyl coenzyme A carboxylase (ACC) complex. Biotin carboxylase (BC) catalyzes the carboxylation of biotin on its carrier protein (BCCP) and then the CO(2) group is transferred by the transcarboxylase to acetyl-CoA to form malonyl-CoA. The polypeptide is Acetyl-coenzyme A carboxylase carboxyl transferase subunit beta (Cronobacter sakazakii (strain ATCC BAA-894) (Enterobacter sakazakii)).